A 162-amino-acid chain; its full sequence is NADH-quinone oxidoreductase subunit I (162 aa).

2 4Fe-4S ferredoxin-type domains span residues 53–83 (LRRYPNGEERCIACKLCEAICPALAITIEAE) and 93–122 (TRYDIDLTKCIFCGFCEEACPVDAVVETRI). Cys-63, Cys-66, Cys-69, Cys-73, Cys-102, Cys-105, Cys-108, and Cys-112 together coordinate [4Fe-4S] cluster.

Belongs to the complex I 23 kDa subunit family. As to quaternary structure, NDH-1 is composed of 14 different subunits. Subunits NuoA, H, J, K, L, M, N constitute the membrane sector of the complex. It depends on [4Fe-4S] cluster as a cofactor.

It is found in the cell inner membrane. It catalyses the reaction a quinone + NADH + 5 H(+)(in) = a quinol + NAD(+) + 4 H(+)(out). NDH-1 shuttles electrons from NADH, via FMN and iron-sulfur (Fe-S) centers, to quinones in the respiratory chain. The immediate electron acceptor for the enzyme in this species is believed to be ubiquinone. Couples the redox reaction to proton translocation (for every two electrons transferred, four hydrogen ions are translocated across the cytoplasmic membrane), and thus conserves the redox energy in a proton gradient. This Dechloromonas aromatica (strain RCB) protein is NADH-quinone oxidoreductase subunit I.